The following is a 309-amino-acid chain: MPICIPDELPAVNFLQNENVFVMTSTRANIQNIRPLKVLLLNLMPKKIETENQFLRLLSNTPLQVDIQLLRIDNRKCRNTPAEHLNNFYCDFEQIKHQNFDGLIVTGAPLGLVEFEDVAYWKQIERIISWAKEHVTSTLFICWAVQAALNILYGLPKFTREVKLSGVYYHSTLNPLALLTRGFDESFFAPHSRYADFPEQVVREHTDLDILSSSEDAGVYLLASKDKRMVFVTGHPEYDAGTLASEYLRDLAAGLAPKIPINYFPDNNPERKPLASWRSHGHLLFSNWLNYYVYQITPYDLTYMNPTLD.

Residue Cys142 is the Acyl-thioester intermediate of the active site. 2 residues coordinate substrate: Lys163 and Ser192. His235 acts as the Proton acceptor in catalysis. Glu237 is an active-site residue. Arg249 serves as a coordination point for substrate.

It belongs to the MetA family.

The protein localises to the cytoplasm. The catalysed reaction is L-homoserine + succinyl-CoA = O-succinyl-L-homoserine + CoA. It participates in amino-acid biosynthesis; L-methionine biosynthesis via de novo pathway; O-succinyl-L-homoserine from L-homoserine: step 1/1. In terms of biological role, transfers a succinyl group from succinyl-CoA to L-homoserine, forming succinyl-L-homoserine. The chain is Homoserine O-succinyltransferase from Photorhabdus laumondii subsp. laumondii (strain DSM 15139 / CIP 105565 / TT01) (Photorhabdus luminescens subsp. laumondii).